The primary structure comprises 535 residues: Glucose-6-phosphate isomerase (535 aa).

Glu-359 functions as the Proton donor in the catalytic mechanism. Residues His-390 and Lys-505 contribute to the active site.

It belongs to the GPI family.

It localises to the cytoplasm. The catalysed reaction is alpha-D-glucose 6-phosphate = beta-D-fructose 6-phosphate. Its pathway is carbohydrate biosynthesis; gluconeogenesis. It functions in the pathway carbohydrate degradation; glycolysis; D-glyceraldehyde 3-phosphate and glycerone phosphate from D-glucose: step 2/4. In terms of biological role, catalyzes the reversible isomerization of glucose-6-phosphate to fructose-6-phosphate. In Treponema pallidum (strain Nichols), this protein is Glucose-6-phosphate isomerase.